The following is a 560-amino-acid chain: Platelet glycoprotein V (560 aa).

A signal peptide spans 1 to 16 (MLRGTLLCAVLGLLRA). One can recognise an LRRNT domain in the interval 17–50 (QPFPCPPACKCVFRDAAQCSGGDVARISALGLPT). Residues 17 to 523 (QPFPCPPACK…KGQDHSPFWG (507 aa)) are Extracellular-facing. N-linked (GlcNAc...) asparagine glycosylation occurs at asparagine 51. LRR repeat units lie at residues 75-96 (VLQRLMISDSHISAVAPGTFSD), 99-120 (KLKTLRLSRNKITHLPGALLDK), 123-144 (LLEQLFLDHNALRGIDQNMFQK), 147-168 (NLQELALNQNQLDFLPASLFTN), 171-193 (NLKLLDLSGNNLTHLPKGLLGAQ), 195-216 (KLERLLLHSNRLVSLDSGLLNS), 219-240 (ALTELQFHRNHIRSIAPGAFDR), 243-264 (NLSSLTLSRNHLAFLPSALFLH), 267-288 (NLTLLTLFENPLAELPGVLFGE), 291-312 (GLQELWLNRTQLRTLPAAAFRN), 340-361 (ELQVLALHSNGLTALPDGLLRG), 364-385 (KLRQVSLRRNRLRALPRALFRN), and 388-409 (SLESVQLDHNQLETLPGDVFGA). An N-linked (GlcNAc...) (complex) asparagine glycan is attached at asparagine 181. Asparagine 243 carries an N-linked (GlcNAc...) (complex) asparagine glycan. Residues asparagine 267, asparagine 298, and asparagine 312 are each glycosylated (N-linked (GlcNAc...) asparagine). An N-linked (GlcNAc...) asparagine glycan is attached at asparagine 385. The LRRCT domain maps to 421–474 (NSWRCDCGLGPFLGWLRQHLGLVGGEEPPRCAGPGAHAGLPLWALPGGDAECPG). The tract at residues 469–498 (DAECPGPRGPPPRPAADSSSEAPVHPALAP) is disordered. An N-linked (GlcNAc...) asparagine glycan is attached at asparagine 499. A helical membrane pass occupies residues 524 to 544 (FYFLLLAVQAMITVIIVFAMI). Residues 545-560 (KIGQLFRKLIRERALG) are Cytoplasmic-facing.

The N-terminus is blocked. Platelets and megakaryocytes.

It is found in the membrane. Its function is as follows. The GPIb-V-IX complex functions as the vWF receptor and mediates vWF-dependent platelet adhesion to blood vessels. The adhesion of platelets to injured vascular surfaces in the arterial circulation is a critical initiating event in hemostasis. This Homo sapiens (Human) protein is Platelet glycoprotein V (GP5).